The chain runs to 118 residues: Large ribosomal subunit protein uL22 (118 aa).

The protein belongs to the universal ribosomal protein uL22 family. In terms of assembly, part of the 50S ribosomal subunit.

This protein binds specifically to 23S rRNA; its binding is stimulated by other ribosomal proteins, e.g. L4, L17, and L20. It is important during the early stages of 50S assembly. It makes multiple contacts with different domains of the 23S rRNA in the assembled 50S subunit and ribosome. Functionally, the globular domain of the protein is located near the polypeptide exit tunnel on the outside of the subunit, while an extended beta-hairpin is found that lines the wall of the exit tunnel in the center of the 70S ribosome. This chain is Large ribosomal subunit protein uL22, found in Chlorobium limicola (strain DSM 245 / NBRC 103803 / 6330).